Consider the following 1088-residue polypeptide: TBC1 domain family member 31 (1088 aa).

A disordered region spans residues 1–20 (MQTTDLGNKESGKIWHRKPN). WD repeat units lie at residues 33–74 (HVDA…LNRN), 75–116 (RFDL…TGAK), 117–157 (ELVS…LDTF), 158–200 (QRKR…SDTL), 201–248 (ACKY…SKQL), 249–296 (FRII…IQTC), and 297–334 (KLVF…NIYS). The interval 356–381 (SKDKDSTGNKSGVSGASQEKVRVSSG) is disordered. Residues 363 to 372 (GNKSGVSGAS) are compositionally biased toward polar residues. The Rab-GAP TBC domain occupies 432–607 (EYPAKYRMFI…RLFDNVFSNH (176 aa)). Coiled coils occupy residues 736 to 903 (QQQE…VETD) and 1048 to 1076 (RGEL…ARRK).

The protein resides in the cytoplasm. It localises to the cytoskeleton. The protein localises to the microtubule organizing center. It is found in the centrosome. Its subcellular location is the centriolar satellite. The protein resides in the cilium basal body. Functionally, molecular adapter which is involved in cilium biogenesis. Part of a functional complex including OFD1 a centriolar protein involved in cilium assembly. Could regulate the cAMP-dependent phosphorylation of OFD1, and its subsequent ubiquitination by PJA2 which ultimately leads to its proteasomal degradation. This chain is TBC1 domain family member 31, found in Xenopus tropicalis (Western clawed frog).